Reading from the N-terminus, the 564-residue chain is ATP-dependent RNA helicase ROK1 (564 aa).

2 disordered regions span residues 1–45 (MDIF…ESQI) and 62–87 (EDDREKTTENDSPNKEEKSGNDDGLI). 3 stretches are compositionally biased toward basic and acidic residues: residues 13–23 (VKKESGPKAKA), 33–45 (DENHKEDNNESQI), and 62–86 (EDDREKTTENDSPNKEEKSGNDDGL). Positions 122–150 (DLISRFSFDKRLLNNLIENGFTEPTPIQC) match the Q motif motif. The region spanning 153-333 (IPVALNNRDV…QSIMMDPVRV (181 aa)) is the Helicase ATP-binding domain. 166–173 (GPTGSGKT) is a binding site for ATP. The short motif at 280 to 283 (DEAD) is the DEAD box element. The Helicase C-terminal domain occupies 344-506 (NIEQKLIFCG…EVSEWMDKMA (163 aa)). The interval 512-564 (EKESIKNGKAHKERKQITTVPKMDKAKRRRQQEMIAASKRRKNEELSKKHFSK) is disordered. Over residues 553-564 (KNEELSKKHFSK) the composition is skewed to basic and acidic residues.

Belongs to the DEAD box helicase family. DDX52/ROK1 subfamily. In terms of assembly, interacts with the U3 snoRNA and is associated with the 90S and 40S pre-ribosomes. This association requires the presence of RRP5. Also interacts with OSH3.

Its subcellular location is the nucleus. It is found in the nucleolus. The enzyme catalyses ATP + H2O = ADP + phosphate + H(+). ATP-dependent RNA helicase involved in 40S ribosomal subunit biogenesis. Required for the processing and cleavage of 35S pre-rRNA at sites A0, A1, and A2, leading to mature 18S rRNA. May also have a gene-specific regulatory function since it affects nuclear fusion by regulating KAR4 expression and contributes with KEM1 to ISP-1 sensitivity. In Saccharomyces cerevisiae (strain ATCC 204508 / S288c) (Baker's yeast), this protein is ATP-dependent RNA helicase ROK1 (ROK1).